The following is a 634-amino-acid chain: Microtubule-associated protein 70-2 (634 aa).

The segment at 1–57 (MSDVSGDGDLSATVTEHEVTPQPPVSSATYPSLTVSASYKESSGGKSSSKRRPIRPS) is disordered. Positions 25-35 (VSSATYPSLTV) are enriched in polar residues. The segment covering 36–47 (SASYKESSGGKS) has biased composition (low complexity). Residues 74 to 392 (DPVKVELNRL…LRLKVLEETL (319 aa)) are a coiled coil. The tract at residues 258 to 494 (ILDRMHRQKV…YSFNKATDDS (237 aa)) is required for targeting to microtubules. Polar residues-rich tracts occupy residues 393–417 (RGTS…SRRQ) and 443–464 (MRHS…TSKS). Disordered stretches follow at residues 393 to 526 (RGTS…SVPG) and 594 to 634 (VEKD…KSTQ). The stretch at 532 to 601 (LQKEVVSLRK…MRVEKDQDAR (70 aa)) forms a coiled coil. The span at 605–616 (FSNSKSPSNTAQ) shows a compositional bias: polar residues.

Belongs to the MAP70 family.

It is found in the cytoplasm. It localises to the cytoskeleton. Plant-specific protein that interact with microtubules. The polypeptide is Microtubule-associated protein 70-2 (MAP70.2) (Arabidopsis thaliana (Mouse-ear cress)).